The sequence spans 184 residues: Antigen Sm21.7 (184 aa).

Residues 37 to 72 (LDMKQVNEWIALFDVDKDQKITFEEFCRGLGLKQNE) enclose the EF-hand domain. Residues Asp-50, Asp-52, Asp-54, Lys-56, and Glu-61 each coordinate Ca(2+).

The sequence is that of Antigen Sm21.7 (SM21.7) from Schistosoma mansoni (Blood fluke).